Here is a 159-residue protein sequence, read N- to C-terminus: Ribosomal RNA large subunit methyltransferase H (159 aa).

S-adenosyl-L-methionine-binding positions include Leu-76, Gly-108, and 127–132 (FGKLTM).

Belongs to the RNA methyltransferase RlmH family. Homodimer.

The protein localises to the cytoplasm. The catalysed reaction is pseudouridine(1915) in 23S rRNA + S-adenosyl-L-methionine = N(3)-methylpseudouridine(1915) in 23S rRNA + S-adenosyl-L-homocysteine + H(+). Functionally, specifically methylates the pseudouridine at position 1915 (m3Psi1915) in 23S rRNA. This chain is Ribosomal RNA large subunit methyltransferase H, found in Lacticaseibacillus casei (strain BL23) (Lactobacillus casei).